Here is a 69-residue protein sequence, read N- to C-terminus: Conotoxin SIVA (69 aa).

The N-terminal stretch at 1 to 21 (MGMRMMFTVFLLVVLATTVVS) is a signal peptide. Positions 22-38 (TPSDRASDGRNAAVHER) are excised as a propeptide. Gln39 is modified (pyrrolidone carboxylic acid). An O-linked (HexNAc...) serine glycan is attached at Ser45. 4-hydroxyproline is present on residues Pro55, Pro60, and Pro61. Residue Cys68 is modified to Cysteine amide.

This sequence belongs to the conotoxin A superfamily. In terms of processing, contains 3 disulfide bonds. O-linked glycan consists of Hex3-HexNAc2 pentasaccharide. In terms of tissue distribution, expressed by the venom duct.

The protein resides in the secreted. Neurotoxin with probable activity on sodium channel. Induces intense repetitive firing of the frog neuromuscular junction, leading to a tetanic contracture in muscle fiber (spastic paralysis). In vivo, shows the same effect as the whole venom when injected on fish. Intraperitoneal injection into fish induces a period of rapid swimming followed by a spastic paralysis with stiff fibrillating fins. At high doses, the peptide is lethal to both fish and mice. This Conus striatus (Striated cone) protein is Conotoxin SIVA.